The chain runs to 370 residues: Phosphate-binding protein PstS2 (370 aa).

The first 22 residues, 1–22, serve as a signal peptide directing secretion; the sequence is MKFARSGAAVSLLAAGTLVLTA. A lipid anchor (N-palmitoyl cysteine) is attached at Cys-23. Cys-23 carries S-diacylglycerol cysteine lipidation. Phosphate is bound by residues 54 to 56, Ser-84, Asp-102, and 191 to 193; these read STA and SGT.

This sequence belongs to the PstS family. In terms of assembly, the complex is composed of two ATP-binding proteins (PstB), two transmembrane proteins (PstC and PstA) and a solute-binding protein (PstS).

The protein localises to the cell membrane. It is found in the secreted. Functions in inorganic phosphate uptake, a phosphate-binding protein, although probably not the main uptake protein under phosphate starvation. Part of the ABC transporter complex PstSACB involved in phosphate import. This is Phosphate-binding protein PstS2 (pstS2) from Mycobacterium bovis (strain BCG / Pasteur 1173P2).